We begin with the raw amino-acid sequence, 699 residues long: tRNA 5-methylaminomethyl-2-thiouridine biosynthesis bifunctional protein MnmC (699 aa).

Positions Met-1 to Asn-260 are tRNA (mnm(5)s(2)U34)-methyltransferase. An FAD-dependent cmnm(5)s(2)U34 oxidoreductase region spans residues Ile-282–Leu-699.

The protein in the N-terminal section; belongs to the methyltransferase superfamily. tRNA (mnm(5)s(2)U34)-methyltransferase family. This sequence in the C-terminal section; belongs to the DAO family. Requires FAD as cofactor.

The protein localises to the cytoplasm. The enzyme catalyses 5-aminomethyl-2-thiouridine(34) in tRNA + S-adenosyl-L-methionine = 5-methylaminomethyl-2-thiouridine(34) in tRNA + S-adenosyl-L-homocysteine + H(+). In terms of biological role, catalyzes the last two steps in the biosynthesis of 5-methylaminomethyl-2-thiouridine (mnm(5)s(2)U) at the wobble position (U34) in tRNA. Catalyzes the FAD-dependent demodification of cmnm(5)s(2)U34 to nm(5)s(2)U34, followed by the transfer of a methyl group from S-adenosyl-L-methionine to nm(5)s(2)U34, to form mnm(5)s(2)U34. This chain is tRNA 5-methylaminomethyl-2-thiouridine biosynthesis bifunctional protein MnmC, found in Shewanella oneidensis (strain ATCC 700550 / JCM 31522 / CIP 106686 / LMG 19005 / NCIMB 14063 / MR-1).